A 79-amino-acid polypeptide reads, in one-letter code: Small ribosomal subunit protein bS18 (79 aa).

Belongs to the bacterial ribosomal protein bS18 family. As to quaternary structure, part of the 30S ribosomal subunit. Forms a tight heterodimer with protein bS6.

Its function is as follows. Binds as a heterodimer with protein bS6 to the central domain of the 16S rRNA, where it helps stabilize the platform of the 30S subunit. This chain is Small ribosomal subunit protein bS18, found in Ureaplasma parvum serovar 3 (strain ATCC 27815 / 27 / NCTC 11736).